Consider the following 568-residue polypeptide: Malate synthase, glyoxysomal (568 aa).

Residues 1–20 (MGSLGMYSESGLTKKGSSRG) form a disordered region. Arg183 functions as the Proton acceptor in the catalytic mechanism. Asp469 serves as the catalytic Proton donor. The short motif at 566–568 (SKL) is the Microbody targeting signal element.

Belongs to the malate synthase family.

The protein localises to the glyoxysome. The catalysed reaction is glyoxylate + acetyl-CoA + H2O = (S)-malate + CoA + H(+). It functions in the pathway carbohydrate metabolism; glyoxylate cycle; (S)-malate from isocitrate: step 2/2. This chain is Malate synthase, glyoxysomal, found in Cucumis sativus (Cucumber).